We begin with the raw amino-acid sequence, 913 residues long: Transient receptor potential cation channel protein painless (913 aa).

The Cytoplasmic portion of the chain corresponds to 1–490 (MDFNNCGFID…SSFLFLKWHR (490 aa)). ANK repeat units lie at residues 154–189 (GEFT…DIDS), 260–289 (EYFG…DINS), and 368–397 (GRLV…YIGS). The chain crosses the membrane as a helical span at residues 491–511 (LSVIFYLNFLIYSLFTASIIT). The Extracellular portion of the chain corresponds to 512–523 (YTLLKFHESDQR). A helical membrane pass occupies residues 524–544 (ALTAFFGLLSWLGISYLILRE). Topologically, residues 545–555 (CIQWIMSPVRY) are cytoplasmic. Residues 556–576 (FWSITNIMEVALITLSIFTCM) traverse the membrane as a helical segment. At 577–586 (ESSFDKETQR) the chain is on the extracellular side. Residues 587-607 (VLAVFTILLVSMEFCLLVGSL) form a helical membrane-spanning segment. At 608–628 (PVLSISTHMLMLREVSNSFLK) the chain is on the cytoplasmic side. The helical transmembrane segment at 629-649 (SFTLYSIFVLTFSLCFYILFG) threads the bilayer. Topologically, residues 650–708 (KSVEEDQSKSATPCPPLGKKEGKDEEQGFNTFTKPIEAVIKTIVMLTGEFDAGSIQFTS) are extracellular. The tract at residues 656–675 (QSKSATPCPPLGKKEGKDEE) is disordered. Residues 709 to 729 (IYTYLIFLLFVIFMTIVLFNL) form a helical membrane-spanning segment. Residues 730–913 (LNGLAVSDTQ…QLIQLVQDRK (184 aa)) are Cytoplasmic-facing.

The protein belongs to the transient receptor (TC 1.A.4) family. As to expression, present in multidendritic neurons, chordotonal neurons, a subset of cells in the central nervous system and a subset of sensory neurons in the antennal-maxillary complex. Not detected in gonads and dorsal vessels (at protein level). Expressed in peripheral neurons that extend multiple branched dendrites beneath the larval epidermis, similar to vertebrate pain receptors.

The protein resides in the membrane. Functionally, receptor-activated non-selective cation channel involved in detection of pain sensation due to high temperature. Involved in heat nociception by being activated by noxious temperature of 38 degrees Celsius. The polypeptide is Transient receptor potential cation channel protein painless (pain) (Drosophila melanogaster (Fruit fly)).